Here is a 147-residue protein sequence, read N- to C-terminus: Myoglobin (147 aa).

The Globin domain maps to 2–141 (ADFDMVLKCW…IITDMEADYK (140 aa)). His60 contributes to the nitrite binding site. His60 provides a ligand contact to O2. His89 serves as a coordination point for heme b.

It belongs to the globin family. As to quaternary structure, monomeric.

It is found in the cytoplasm. It localises to the sarcoplasm. The catalysed reaction is Fe(III)-heme b-[protein] + nitric oxide + H2O = Fe(II)-heme b-[protein] + nitrite + 2 H(+). The enzyme catalyses H2O2 + AH2 = A + 2 H2O. In terms of biological role, monomeric heme protein which primary function is to store oxygen and facilitate its diffusion within muscle tissues. Reversibly binds oxygen through a pentacoordinated heme iron and enables its timely and efficient release as needed during periods of heightened demand. Depending on the oxidative conditions of tissues and cells, and in addition to its ability to bind oxygen, it also has a nitrite reductase activity whereby it regulates the production of bioactive nitric oxide. Under stress conditions, like hypoxia and anoxia, it also protects cells against reactive oxygen species thanks to its pseudoperoxidase activity. In Channichthys rhinoceratus (Unicorn icefish), this protein is Myoglobin (mb).